The sequence spans 249 residues: Dof zinc finger protein DOF4.5 (249 aa).

The Dof-type zinc-finger motif lies at 25–79 (RVCARCDSDNTKFCYYNNYCEFQPRYFCKNCRRYWTHGGALRNIPIGGSSRAKRA). 4 residues coordinate Zn(2+): Cys27, Cys30, Cys52, and Cys55.

Its subcellular location is the nucleus. Its function is as follows. Transcription factor that binds specifically to a 5'-AA[AG]G-3' consensus core sequence. This chain is Dof zinc finger protein DOF4.5 (DOF4.5), found in Arabidopsis thaliana (Mouse-ear cress).